Reading from the N-terminus, the 332-residue chain is Heat-inducible transcription repressor HrcA (332 aa).

This sequence belongs to the HrcA family.

Functionally, negative regulator of class I heat shock genes (grpE-dnaK-dnaJ and groELS operons). Prevents heat-shock induction of these operons. The polypeptide is Heat-inducible transcription repressor HrcA (Mycoplasma mobile (strain ATCC 43663 / 163K / NCTC 11711) (Mesomycoplasma mobile)).